The sequence spans 415 residues: Probable RAD2-like endonuclease 369L (415 aa).

Residues Met1 to Leu114 form an N-domain region. Residues Asp34, Glu86, Glu198, Glu200, Asp219, Asp221, and Asp277 each contribute to the Mg(2+) site. The segment at Val163–Gln297 is I-domain.

Belongs to the XPG/RAD2 endonuclease family. It depends on Mg(2+) as a cofactor.

Its subcellular location is the host nucleus. Probable endonuclease. This Acheta domesticus (House cricket) protein is Probable RAD2-like endonuclease 369L.